Here is a 2871-residue protein sequence, read N- to C-terminus: Fibrillin-1 (2871 aa).

A signal peptide spans 1–24 (MRRGGLLEVALGFTVLLASYTSHG). The propeptide occupies 25–44 (ADTNLEAGNVKETRANRAKR). A fibrillin unique N-terminal (FUN) domain region spans residues 45-81 (RGGGGHDALKGPNVCGSRYNAYCCPGWKTLPGGNQCI). Residues 45-450 (RGGGGHDALK…PPRVLPVNVT (406 aa)) form an N-terminal domain region. Disulfide bonds link Cys59/Cys68, Cys67/Cys80, Cys85/Cys94, Cys89/Cys100, Cys102/Cys111, Cys119/Cys129, Cys123/Cys134, Cys136/Cys145, Cys150/Cys160, Cys154/Cys166, and Cys168/Cys177. EGF-like domains lie at 81-112 (IVPI…PSCG), 115-146 (SIQH…THCG), and 147-178 (QPVC…PQCE). The tract at residues 119 to 329 (CNIRCMNGGS…YTSPDGTRCI (211 aa)) is interaction with MFAP4. The region spanning 184 to 236 (GPCFTVISNQMCQGQLSGIVCTKTLCCATVGRAWGHPCEMCPAQPHPCRRGFI) is the TB 1 domain. Positions 195–221 (CQGQLSGIVCTKTLCCATVGRAWGHPC) are hybrid domain 1. Residues 246-287 (DVDECQAIPGLCQGGNCINTVGSFECKCPAGHKFNEVSQKCE) enclose the EGF-like 4; calcium-binding domain. Disulfide bonds link Cys250–Cys262, Cys257–Cys271, Cys273–Cys286, Cys292–Cys304, Cys299–Cys313, and Cys315–Cys328. O-linked (Glc) serine glycosylation occurs at Ser268. The EGF-like 5; calcium-binding domain maps to 288-329 (DIDECSTIPGICDGGECTNTVSSYFCKCPPGFYTSPDGTRCI). In terms of domain architecture, TB 2 spans 334-389 (GYCYTALANGRCSNQLPQSITKMQCCCDVGRCWSPGVTVAPEMCPIRATEDFNKLC). The N-linked (GlcNAc...) asparagine glycan is linked to Asn448. The region spanning 449–489 (VTDYCQLFRYLCQNGRCIPTPGSYRCECNKGFQLDLRGECI) is the EGF-like 6 domain. 15 cysteine pairs are disulfide-bonded: Cys453/Cys465, Cys460/Cys474, Cys476/Cys488, Cys494/Cys504, Cys499/Cys513, Cys515/Cys528, Cys534/Cys546, Cys541/Cys555, Cys557/Cys570, Cys576/Cys587, Cys582/Cys596, Cys598/Cys611, Cys617/Cys628, Cys623/Cys637, and Cys639/Cys652. A glycan (O-linked (Glc) serine) is linked at Ser471. The 40-residue stretch at 490–529 (DVDECEKNPCAGGECINTQGSYTCQCRPGYQSTLTRTECR) folds into the EGF-like 7; calcium-binding domain. Residue Ser510 is glycosylated (O-linked (Glc) serine). Residues 530 to 571 (DIDECLQNGRICNNGRCINTDGSFHCVCNAGFHVTRDGKNCE) enclose the EGF-like 8; calcium-binding domain. Positions 572–612 (DMDECSIRNMCLNGMCINEDGSFKCICKPGFQLASDGRYCK) constitute an EGF-like 9; calcium-binding domain. The region spanning 613 to 653 (DINECETPGICMNGRCVNTDGSYRCECFPGLAVGLDGRVCV) is the EGF-like 10; calcium-binding domain. In terms of domain architecture, TB 3 spans 659-711 (STCYGGYKRGQCVKPLFGAVTKSECCCASTEYAFGEPCQPCPSQNSAEYQALC). The region spanning 723–764 (DINECALDPDICPNGICENLRGTYKCICNSGYEVDSTGKNCV) is the EGF-like 11; calcium-binding domain. 16 cysteine pairs are disulfide-bonded: Cys727–Cys739, Cys734–Cys748, Cys750–Cys763, Cys769–Cys781, Cys776–Cys790, Cys792–Cys805, Cys811–Cys821, Cys816–Cys830, Cys832–Cys845, Cys853–Cys875, Cys862–Cys887, Cys876–Cys890, Cys896–Cys908, Cys914–Cys926, Cys921–Cys935, and Cys937–Cys950. Residues 765–806 (DINECVLNSLLCDNGQCRNTPGSFVCTCPKGFIYKPELKTCE) enclose the EGF-like 12; calcium-binding domain. An EGF-like 13; calcium-binding domain is found at 807–846 (DIDECESSPCINGVCKNSPGSFICECSSESTLDPTKTICI). The 52-residue stretch at 851-902 (GTCWQTVIDGRCEININGATLKSQCCSSLGAAWGSPCTPCQVDPICGKGYSR) folds into the TB 4 domain. A hybrid domain 2 region spans residues 862 to 887 (CEININGATLKSQCCSSLGAAWGSPC). The EGF-like 14; calcium-binding domain occupies 910-951 (DIDECEVFPGVCKNGLCVNSKGSFKCQCPSGMTLDATGRICL). One can recognise a TB 5 domain in the interval 956-1008 (ETCFLRYEDEECTLPVAGRHRMDACCCSVGAAWGTEECEECPVRNTPEYEELC). In terms of domain architecture, EGF-like 15; calcium-binding spans 1028 to 1069 (DINECKMIPNLCTHGKCRNTIGSFKCRCDSGFALDSEERNCT). 46 cysteine pairs are disulfide-bonded: Cys1032–Cys1044, Cys1039–Cys1053, Cys1055–Cys1068, Cys1074–Cys1086, Cys1081–Cys1095, Cys1097–Cys1111, Cys1117–Cys1129, Cys1124–Cys1138, Cys1140–Cys1153, Cys1159–Cys1171, Cys1166–Cys1180, Cys1182–Cys1195, Cys1201–Cys1212, Cys1208–Cys1221, Cys1223–Cys1236, Cys1242–Cys1254, Cys1249–Cys1263, Cys1265–Cys1278, Cys1284–Cys1296, Cys1291–Cys1305, Cys1307–Cys1320, Cys1326–Cys1339, Cys1333–Cys1348, Cys1350–Cys1361, Cys1367–Cys1380, Cys1374–Cys1389, Cys1391–Cys1402, Cys1408–Cys1420, Cys1415–Cys1429, Cys1431–Cys1444, Cys1450–Cys1461, Cys1456–Cys1470, Cys1472–Cys1485, Cys1491–Cys1502, Cys1497–Cys1511, Cys1513–Cys1526, Cys1534–Cys1562, Cys1549–Cys1574, Cys1563–Cys1577, Cys1564–Cys1589, Cys1610–Cys1622, Cys1617–Cys1631, Cys1633–Cys1646, Cys1652–Cys1663, Cys1658–Cys1672, and Cys1674–Cys1687. Residue Asn1067 is glycosylated (N-linked (GlcNAc...) asparagine). In terms of domain architecture, EGF-like 16; calcium-binding spans 1070-1112 (DIDECRISPDLCGRGQCVNTPGDFECKCDEGYESGFMMMKNCM). The EGF-like 17; calcium-binding domain maps to 1113–1154 (DIDECQRDPLLCRGGVCLNTEGSYRCECPPGHQLAPNISACI). Ser1135 is a glycosylation site (O-linked (Glc) serine). Asn1149 carries N-linked (GlcNAc...) asparagine glycosylation. The EGF-like 18; calcium-binding domain maps to 1155–1196 (DINECELSAHLCPHGRCVNLIGKYQCACNPGYHSTPDRLFCV). Positions 1197–1237 (DIDECSIMNGGCETFCTNSEGSYECSCQPGFALMPDQRSCT) constitute an EGF-like 19; calcium-binding domain. Residue Ser1218 is glycosylated (O-linked (Glc) serine). In terms of domain architecture, EGF-like 20; calcium-binding spans 1238–1279 (DIDECEDNPNICDGGQCTNIPGEYRCLCYDGFMASEDMKTCV). Residues 1280–1321 (DVNECDLNPNICLSGTCENTKGSFICHCDMGYSGKKGKTGCT) form the EGF-like 21; calcium-binding domain. An O-linked (Glc) serine glycan is attached at Ser1302. In terms of domain architecture, EGF-like 22; calcium-binding spans 1322-1362 (DINECEIGAHNCDRHAVCTNTAGSFKCSCSPGWIGDGIKCT). Residue Ser1345 is glycosylated (O-linked (Glc) serine). In terms of domain architecture, EGF-like 23; calcium-binding spans 1363–1403 (DLDECSNGTHMCSQHADCKNTMGSYRCLCKEGYTGDGFTCT). Residue Asn1369 is glycosylated (N-linked (GlcNAc...) asparagine). An O-linked (Glc) serine glycan is attached at Ser1386. The region spanning 1404-1445 (DLDECSENLNLCGNGQCLNAPGGYRCECDMGFVPSADGKACE) is the EGF-like 24; calcium-binding domain. The region spanning 1446 to 1486 (DIDECSLPNICVFGTCHNLPGLFRCECEIGYELDRSGGNCT) is the EGF-like 25; calcium-binding domain. N-linked (GlcNAc...) asparagine glycosylation is present at Asn1484. The EGF-like 26; calcium-binding domain occupies 1487–1527 (DVNECLDPTTCISGNCVNTPGSYTCDCPPDFELNPTRVGCV). Ser1508 is a glycosylation site (O-linked (Glc) serine). The interval 1528 to 2731 (DTRSGNCYLD…GYPKRGRKRR (1204 aa)) is C-terminal domain. In terms of domain architecture, TB 6 spans 1532–1589 (GNCYLDIRPRGDNGDTACSNEIGVGVSKASCCCSLGKAWGTPCELCPPVNTSEYKILC). The Cell attachment site motif lies at 1541–1543 (RGD). The N-linked (GlcNAc...) asparagine glycan is linked to Asn1581. The region spanning 1606 to 1647 (DIDECQELPGLCQGGKCINTFGSFQCRCPTGYYLNEDTRVCD) is the EGF-like 27; calcium-binding domain. Ser1628 is a glycosylation site (O-linked (Glc) serine). An EGF-like 28; calcium-binding domain is found at 1648–1688 (DVNECETPGICGPGTCYNTVGNYTCICPPDYMQVNGGNNCM). N-linked (GlcNAc...) asparagine glycosylation is present at Asn1669. Residues 1693–1748 (SLCYRNYYADNQTCDGELLFNMTKKMCCCSYNIGRAWNKPCEQCPIPSTDEFATLC) enclose the TB 7 domain. 2 N-linked (GlcNAc...) asparagine glycosylation sites follow: Asn1703 and Asn1713. The region spanning 1766-1807 (DIDECREIPGVCENGVCINMVGSFRCECPVGFFYNDKLLVCE) is the EGF-like 29; calcium-binding domain. Disulfide bonds link Cys1770–Cys1782, Cys1777–Cys1791, Cys1793–Cys1806, Cys1812–Cys1824, Cys1818–Cys1833, Cys1835–Cys1847, Cys1853–Cys1865, Cys1860–Cys1874, Cys1876–Cys1889, Cys1895–Cys1905, Cys1900–Cys1914, Cys1916–Cys1928, Cys1934–Cys1947, Cys1942–Cys1956, Cys1958–Cys1971, Cys1977–Cys1989, Cys1984–Cys1998, Cys2000–Cys2011, Cys2017–Cys2029, Cys2024–Cys2038, Cys2040–Cys2053, Cys2061–Cys2083, Cys2070–Cys2096, Cys2084–Cys2099, Cys2085–Cys2111, Cys2131–Cys2142, Cys2137–Cys2151, Cys2153–Cys2164, Cys2170–Cys2181, Cys2176–Cys2190, Cys2192–Cys2204, Cys2210–Cys2221, Cys2217–Cys2230, Cys2232–Cys2245, Cys2251–Cys2265, Cys2258–Cys2274, Cys2276–Cys2289, Cys2295–Cys2307, Cys2302–Cys2316, and Cys2318–Cys2331. The EGF-like 30; calcium-binding domain maps to 1808–1848 (DIDECQNGPVCQRNAECINTAGSYRCDCKPGYRFTSTGQCN). An O-linked (Glc) serine glycan is attached at Ser1830. An EGF-like 31; calcium-binding domain is found at 1849-1890 (DRNECQEIPNICSHGQCIDTVGSFYCLCHTGFKTNADQTMCL). Residue Ser1871 is glycosylated (O-linked (Glc) serine). The region spanning 1891–1929 (DINECERDACGNGTCRNTIGSFNCRCNHGFILSHNNDCI) is the EGF-like 32; calcium-binding domain. Asn1902 is a glycosylation site (N-linked (GlcNAc...) asparagine). An O-linked (Glc) serine glycan is attached at Ser1911. In terms of domain architecture, EGF-like 33; calcium-binding spans 1930–1972 (DVDECATGNGNLCRNGQCINTVGSFQCQCNEGYEVAPDGRTCV). Ser1953 carries O-linked (Glc) serine glycosylation. The 40-residue stretch at 1973–2012 (DINECLLDPRKCAPGTCQNLDGSYRCICPPGYSLQNDKCE) folds into the EGF-like 34; calcium-binding domain. The region spanning 2013 to 2054 (DIDECVEEPEICALGTCSNTEGSFKCLCPDGFSLSSTGRRCQ) is the EGF-like 35; calcium-binding domain. Residue Ser2035 is glycosylated (O-linked (Glc) serine). A TB 8 domain is found at 2059-2111 (SYCYAKFEGGKCSSPKSRNHSKQECCCALKGEGWGDPCELCPTEPDEAFRQIC). Residue Asn2077 is glycosylated (N-linked (GlcNAc...) asparagine). One can recognise an EGF-like 36; calcium-binding domain in the interval 2127–2165 (DMDECKEPDVCKHGQCINTDGSYRCECPFGYILQGNECV). O-linked (Glc) serine glycosylation occurs at Ser2148. An EGF-like 37; calcium-binding domain is found at 2166-2205 (DTDECSVGNPCGNGTCKNVIGGFECTCEEGFEPGPMMTCE). Asn2178 is a glycosylation site (N-linked (GlcNAc...) asparagine). An EGF-like 38; calcium-binding domain is found at 2206–2246 (DINECAQNPLLCAFRCVNTYGSYECKCPAGYVLREDRRMCK). A glycan (O-linked (Glc) serine) is linked at Ser2227. One can recognise an EGF-like 39; calcium-binding domain in the interval 2247–2290 (DEDECEEGKHDCAEKQMECKNLIGTYLCICGPGYQRRPDGEGCV). The EGF-like 40; calcium-binding domain occupies 2291-2332 (DENECQTKPGICENGRCLNTRGSYTCECNDGFTASPNQDECL). Ser2313 carries O-linked (Glc) serine glycosylation. The TB 9 domain maps to 2337–2390 (GYCFTEVLQNMCQIGSSNRNPVTKSECCCDGGRGWGPHCEICPFQGTVAFKKLC). Positions 2402-2443 (DIDECKVIHDVCRNGECVNDRGSYHCICKTGYTPDITGTACV) constitute an EGF-like 41; calcium-binding domain. 21 disulfides stabilise this stretch: Cys2406/Cys2418, Cys2413/Cys2427, Cys2429/Cys2442, Cys2448/Cys2459, Cys2455/Cys2468, Cys2470/Cys2483, Cys2489/Cys2500, Cys2496/Cys2509, Cys2511/Cys2522, Cys2528/Cys2541, Cys2535/Cys2550, Cys2552/Cys2565, Cys2571/Cys2581, Cys2577/Cys2590, Cys2592/Cys2605, Cys2611/Cys2622, Cys2617/Cys2631, Cys2633/Cys2646, Cys2652/Cys2663, Cys2659/Cys2672, and Cys2674/Cys2686. The 41-residue stretch at 2444–2484 (DLNECNQAPKPCNFICKNTEGSYQCSCPKGYILQEDGRSCK) folds into the EGF-like 42; calcium-binding domain. The O-linked (Glc) serine glycan is linked to Ser2465. Residues 2485–2523 (DLDECATKQHNCQFLCVNTIGSFTCKCPPGFTQHHTACI) form the EGF-like 43; calcium-binding domain. The 43-residue stretch at 2524–2566 (DNNECTSDINLCGSKGICQNTPGSFTCECQRGFSLDPSGASCE) folds into the EGF-like 44; calcium-binding domain. O-linked (Glc) serine glycosylation is present at Ser2547. The 40-residue stretch at 2567 to 2606 (DVDECEGNHRCQHGCQNIIGGYRCSCPQGYLQHYQWNQCV) folds into the EGF-like 45; calcium-binding domain. One can recognise an EGF-like 46; calcium-binding domain in the interval 2607 to 2647 (DENECLSAHICGGASCHNTLGSYKCMCPAGFQYEQFSGGCQ). Ser2628 carries an O-linked (Glc) serine glycan. One can recognise an EGF-like 47; calcium-binding domain in the interval 2648-2687 (DINECGSAQAPCSYGCSNTEGGYLCACPPGYFRIGQGHCV). 2 positions are modified to phosphoserine: Ser2702 and Ser2709. N-linked (GlcNAc...) asparagine glycosylation is found at Asn2734, Asn2750, and Asn2767.

It belongs to the fibrillin family. In terms of assembly, interacts with COL16A1. Interacts with integrin alpha-V/beta-3. Interacts with ADAMTS10; this interaction promotes microfibril assembly. Interacts with THSD4; this interaction promotes fibril formation. Interacts (via N-terminal domain) with FBLN2 and FBLN5. Interacts with ELN. Forms a ternary complex with ELN and FBLN2 or FBLN5 and a significant interaction with ELN seen only in the presence of FBLN2 or FBLN5. Interacts (via N-terminal domain) with LTBP2 (via C-terminal domain) in a Ca(+2)-dependent manner. Interacts (via N-terminal domain) with LTBP1 (via C-terminal domain). Interacts with integrins ITGA5:ITGB1, ITGAV:ITGB3 and ITGAV:ITGB6. Interacts (via N-terminal domain) with BMP2, BMP4, BMP7, BMP10 and GDF5. Interacts (via N-terminal domain) with MFAP2 and MFAP5. Interacts with ADAMTSL5. Interacts with MFAP4. Interacts (via N-terminal domain) with TNFSF11 in a Ca(+2)-dependent manner. Interacts (via N-terminal domain) with EFEMP2; this interaction inhibits EFEMP2 binding to LOX and ELN. Cleavage of N- and C-terminus by furin is required for incorporation into the extracellular matrix and assembly into microfibrils. The C-terminus, which corresponds to the Asprosin chain, was initially thought to constitute a propeptide. Fibrillin-1 and Asprosin chains are still linked together during the secretion from cells, but are subsequently separated by furin, an essential step for incorporation of Fibrillin-1 into the nascent microfibrils. In terms of processing, forms intermolecular disulfide bonds either with other fibrillin-1 molecules or with other components of the microfibrils. Post-translationally, O-glycosylated on serine residues by POGLUT2 and POGLUT3 which is necessary for efficient protein secretion.

The protein localises to the secreted. The protein resides in the extracellular space. It is found in the extracellular matrix. Structural component of the 10-12 nm diameter microfibrils of the extracellular matrix, which conveys both structural and regulatory properties to load-bearing connective tissues. Fibrillin-1-containing microfibrils provide long-term force bearing structural support. In tissues such as the lung, blood vessels and skin, microfibrils form the periphery of the elastic fiber, acting as a scaffold for the deposition of elastin. In addition, microfibrils can occur as elastin-independent networks in tissues such as the ciliary zonule, tendon, cornea and glomerulus where they provide tensile strength and have anchoring roles. Fibrillin-1 also plays a key role in tissue homeostasis through specific interactions with growth factors, such as the bone morphogenetic proteins (BMPs), growth and differentiation factors (GDFs) and latent transforming growth factor-beta-binding proteins (LTBPs), cell-surface integrins and other extracellular matrix protein and proteoglycan components. Regulates osteoblast maturation by controlling TGF-beta bioavailability and calibrating TGF-beta and BMP levels, respectively. Negatively regulates osteoclastogenesis by binding and sequestering an osteoclast differentiation and activation factor TNFSF11. This leads to disruption of TNFSF11-induced Ca(2+) signaling and impairment of TNFSF11-mediated nuclear translocation and activation of transcription factor NFATC1 which regulates genes important for osteoclast differentiation and function. Mediates cell adhesion via its binding to cell surface receptors integrins ITGAV:ITGB3 and ITGA5:ITGB1. Binds heparin and this interaction plays an important role in the assembly of microfibrils. Its function is as follows. Hormone that targets the liver to increase plasma glucose levels. Secreted by white adipose tissue and circulates in the plasma. Acts in response to fasting and promotes blood glucose elevation by binding to the surface of hepatocytes. Promotes hepatocyte glucose release by activating the protein kinase A activity in the liver, resulting in rapid glucose release into the circulation. This is Fibrillin-1 from Bos taurus (Bovine).